We begin with the raw amino-acid sequence, 405 residues long: MATPGNLGSSVLASKTKTKKKHFVAQKVKLFRASDPLLSVLMWGVNHSINELSHVQIPVMLMPDDFKAYSKIKVDNHLFNKENMPSHFKFKEYCPMVFRNLRERFGIDDQDFQNSLTRSAPLPNDSQARSGARFHTSYDKRYVIKTITSEDVAEMHNILKKYHQYIVECHGVTLLPQFLGMYRLNVDGVEIYVIVTRNVFSHRLSVYRKYDLKGSTVAREASDKEKAKELPTLKDNDFINEGQKIYIDDNNKKIFLEKLKKDVEFLAQLKLMDYSLLVGIHDVERAEQEEVECEENDGEEEGESDSTHPIGTPPDSPGNTLNSSPPLAPGEFDPNIDVYAIKCHENAPRKEVYFMAIIDILTHYDAKKKAAHAAKTVKHGAGAEISTVNPEQYSKRFLDFIGHIL.

Ala2 carries the post-translational modification N-acetylalanine. The residue at position 3 (Thr3) is a Phosphothreonine. A Phosphoserine modification is found at Ser14. Residues 33-405 (ASDPLLSVLM…RFLDFIGHIL (373 aa)) form the PIPK domain. The required for interaction with PIP5K1A stretch occupies residues 59 to 65 (VMLMPDD). Residues Lys89 and Lys145 each carry the N6-acetyllysine modification. Residues 288–328 (QEEVECEENDGEEEGESDSTHPIGTPPDSPGNTLNSSPPLA) form a disordered region. Residues 289–304 (EEVECEENDGEEEGES) are compositionally biased toward acidic residues.

As to quaternary structure, homodimer. Interacts with PIP4K2B; the interaction may regulate localization to the nucleus. Probably interacts with PIP5K1A; the interaction inhibits PIP5K1A kinase activity. Phosphorylated in tyrosines. Phosphorylation is induced by light and increases kinase activity. As to expression, detected in rod photoreceptor cells.

The protein localises to the cell membrane. It localises to the nucleus. It is found in the lysosome. Its subcellular location is the cytoplasm. The protein resides in the photoreceptor inner segment. The protein localises to the cell projection. It localises to the cilium. It is found in the photoreceptor outer segment. It carries out the reaction a 1,2-diacyl-sn-glycero-3-phospho-(1D-myo-inositol-5-phosphate) + ATP = a 1,2-diacyl-sn-glycero-3-phospho-(1D-myo-inositol-4,5-bisphosphate) + ADP + H(+). It catalyses the reaction 1,2-dihexadecanoyl-sn-glycero-3-phospho-(1D-myo-inositol-5-phosphate) + ATP = 1,2-dihexadecanoyl-sn-glycero-3-phospho-(1D-myo-inositol-4,5-bisphosphate) + ADP + H(+). The catalysed reaction is 1,2-dihexadecanoyl-sn-glycero-3-phospho-(1D-myo-inositol-5-phosphate) + GTP = 1,2-dihexadecanoyl-sn-glycero-3-phospho-(1D-myo-inositol-4,5-bisphosphate) + GDP + H(+). In rod outer segments, activated by light. Catalyzes the phosphorylation of phosphatidylinositol 5-phosphate (PtdIns5P) on the fourth hydroxyl of the myo-inositol ring, to form phosphatidylinositol 4,5-bisphosphate (PtdIns(4,5)P2). Has both ATP- and GTP-dependent kinase activities. May exert its function by regulating the levels of PtdIns5P, which functions in the cytosol by increasing AKT activity and in the nucleus signals through ING2. May regulate the pool of cytosolic PtdIns5P in response to the activation of tyrosine phosphorylation. Required for lysosome-peroxisome membrane contacts and intracellular cholesterol transport through modulating peroxisomal PtdIns(4,5)P2 level. In collaboration with PIP4K2B, has a role in mediating autophagy in times of nutrient stress. Required for autophagosome-lysosome fusion and the regulation of cellular lipid metabolism. Negatively regulates insulin signaling through a catalytic-independent mechanism. PIP4Ks interact with PIP5Ks and suppress PIP5K-mediated PtdIns(4,5)P2 synthesis and insulin-dependent conversion to PtdIns(3,4,5)P3. May be involved in thrombopoiesis, and the terminal maturation of megakaryocytes and regulation of their size. The polypeptide is Phosphatidylinositol 5-phosphate 4-kinase type-2 alpha (Mus musculus (Mouse)).